The chain runs to 62 residues: Photosystem II reaction center protein Z (62 aa).

2 helical membrane-spanning segments follow: residues 8-28 (AVFA…VVFA) and 41-61 (FSGT…NSLI).

Belongs to the PsbZ family. In terms of assembly, PSII is composed of 1 copy each of membrane proteins PsbA, PsbB, PsbC, PsbD, PsbE, PsbF, PsbH, PsbI, PsbJ, PsbK, PsbL, PsbM, PsbT, PsbY, PsbZ, Psb30/Ycf12, at least 3 peripheral proteins of the oxygen-evolving complex and a large number of cofactors. It forms dimeric complexes.

The protein localises to the plastid. It is found in the chloroplast thylakoid membrane. May control the interaction of photosystem II (PSII) cores with the light-harvesting antenna, regulates electron flow through the 2 photosystem reaction centers. PSII is a light-driven water plastoquinone oxidoreductase, using light energy to abstract electrons from H(2)O, generating a proton gradient subsequently used for ATP formation. In Gossypium barbadense (Sea Island cotton), this protein is Photosystem II reaction center protein Z.